Here is a 442-residue protein sequence, read N- to C-terminus: D-serine dehydratase (442 aa).

At Lys-118 the chain carries N6-(pyridoxal phosphate)lysine.

This sequence belongs to the serine/threonine dehydratase family. DsdA subfamily. As to quaternary structure, monomer. Pyridoxal 5'-phosphate serves as cofactor.

It catalyses the reaction D-serine = pyruvate + NH4(+). This Citrobacter koseri (strain ATCC BAA-895 / CDC 4225-83 / SGSC4696) protein is D-serine dehydratase.